Reading from the N-terminus, the 173-residue chain is Alpha-crystallin A chain (173 aa).

Met-1 is modified (N-acetylmethionine). One can recognise a sHSP domain in the interval 52 to 164 (LFRSVLESGI…SDRPIPVARE (113 aa)). The Zn(2+) site is built by His-100, Glu-102, His-107, and His-154. The tract at residues 152–173 (TIHSDRPIPVAREEKPTSAPSS) is disordered. Residues 153–167 (IHSDRPIPVAREEKP) show a composition bias toward basic and acidic residues.

Belongs to the small heat shock protein (HSP20) family. In terms of assembly, heteropolymer composed of three CRYAA and one CRYAB subunits. Inter-subunit bridging via zinc ions enhances stability, which is crucial as there is no protein turn over in the lens. Can also form homodimers and homotetramers (dimers of dimers) which serve as the building blocks of homooligomers. Within homooligomers, the zinc-binding motif is created from residues of 3 different molecules. His-100 and Glu-102 from one molecule are ligands of the zinc ion, and His-107 and His-154 residues from additional molecules complete the site with tetrahedral coordination geometry.

It localises to the cytoplasm. The protein localises to the nucleus. Its function is as follows. Contributes to the transparency and refractive index of the lens. May act as a chaperone, preventing aggregation of various proteins under a wide range of stress conditions. This Alligator mississippiensis (American alligator) protein is Alpha-crystallin A chain (CRYAA).